A 483-amino-acid chain; its full sequence is Probable zinc metalloprotease PTRG_04977 (483 aa).

An N-terminal signal peptide occupies residues 1-18 (MLFRSALLSNVLLLPACA). Asn96 and Asn121 each carry an N-linked (GlcNAc...) asparagine glycan. Zn(2+) is bound by residues His167, Asp187, and Glu220. N-linked (GlcNAc...) asparagine glycosylation occurs at Asn235. Asp247 provides a ligand contact to Zn(2+). N-linked (GlcNAc...) asparagine glycans are attached at residues Asn310, Asn362, Asn401, Asn411, and Asn421. The 88-residue stretch at 396–483 (PAMPRNVTID…KSPAVYPFPG (88 aa)) folds into the Fibronectin type-III domain.

The protein belongs to the peptidase M28 family. M28B subfamily. Requires Zn(2+) as cofactor.

The protein resides in the secreted. This Pyrenophora tritici-repentis (strain Pt-1C-BFP) (Wheat tan spot fungus) protein is Probable zinc metalloprotease PTRG_04977.